Here is a 410-residue protein sequence, read N- to C-terminus: Large ribosomal subunit protein uL4 (410 aa).

This sequence belongs to the universal ribosomal protein uL4 family.

The protein resides in the cytoplasm. This Tetrahymena thermophila (strain SB210) protein is Large ribosomal subunit protein uL4 (RPL4).